The primary structure comprises 424 residues: CinA-like protein (424 aa).

Belongs to the CinA family.

The sequence is that of CinA-like protein from Syntrophobacter fumaroxidans (strain DSM 10017 / MPOB).